Reading from the N-terminus, the 893-residue chain is Eukaryotic translation initiation factor 3 subunit A (893 aa).

One can recognise a PCI domain in the interval 319 to 502 (LQRMAAHVLL…NSIFFGTDLT (184 aa)). Coiled-coil stretches lie at residues 576-707 (QKII…RAKR) and 784-881 (EIAL…REVA). Disordered regions lie at residues 592 to 634 (AREL…EIQA) and 837 to 893 (AEAR…RRRQ). The span at 837–881 (AEARRLEREAEDEKRRQQYEKQRAKEEEAERKIQEDRDRLAREVA) shows a compositional bias: basic and acidic residues.

This sequence belongs to the eIF-3 subunit A family. Component of the eukaryotic translation initiation factor 3 (eIF-3) complex. The eIF-3 complex interacts with pix.

It localises to the cytoplasm. In terms of biological role, RNA-binding component of the eukaryotic translation initiation factor 3 (eIF-3) complex, which is involved in protein synthesis of a specialized repertoire of mRNAs and, together with other initiation factors, stimulates binding of mRNA and methionyl-tRNAi to the 40S ribosome. The eIF-3 complex specifically targets and initiates translation of a subset of mRNAs involved in cell proliferation. In Drosophila grimshawi (Hawaiian fruit fly), this protein is Eukaryotic translation initiation factor 3 subunit A.